We begin with the raw amino-acid sequence, 266 residues long: Phosphatidylglycerol--prolipoprotein diacylglyceryl transferase (266 aa).

7 helical membrane-spanning segments follow: residues 21–41, 60–80, 95–115, 124–144, 176–196, 203–223, and 236–256; these read LAIR…MWLA, LLFA…VLFY, VWTG…AMLW, FFSV…MGRM, SQLY…NIFI, GAVS…IEYF, and WISM…LLML. Arginine 143 is a binding site for a 1,2-diacyl-sn-glycero-3-phospho-(1'-sn-glycerol).

It belongs to the Lgt family.

It is found in the cell inner membrane. It catalyses the reaction L-cysteinyl-[prolipoprotein] + a 1,2-diacyl-sn-glycero-3-phospho-(1'-sn-glycerol) = an S-1,2-diacyl-sn-glyceryl-L-cysteinyl-[prolipoprotein] + sn-glycerol 1-phosphate + H(+). Its pathway is protein modification; lipoprotein biosynthesis (diacylglyceryl transfer). In terms of biological role, catalyzes the transfer of the diacylglyceryl group from phosphatidylglycerol to the sulfhydryl group of the N-terminal cysteine of a prolipoprotein, the first step in the formation of mature lipoproteins. This chain is Phosphatidylglycerol--prolipoprotein diacylglyceryl transferase, found in Photobacterium profundum (strain SS9).